The chain runs to 465 residues: Cysteine--tRNA ligase (465 aa).

Cysteine 27 lines the Zn(2+) pocket. The 'HIGH' region signature appears at 29–39; that stretch reads PTVYNFFHIGN. The Zn(2+) site is built by cysteine 207, histidine 232, and glutamate 236. Positions 264-268 match the 'KMSKS' region motif; that stretch reads KMSKS. Position 267 (lysine 267) interacts with ATP.

It belongs to the class-I aminoacyl-tRNA synthetase family. Monomer. Zn(2+) is required as a cofactor.

The protein resides in the cytoplasm. The catalysed reaction is tRNA(Cys) + L-cysteine + ATP = L-cysteinyl-tRNA(Cys) + AMP + diphosphate. The polypeptide is Cysteine--tRNA ligase (Clostridium botulinum (strain Kyoto / Type A2)).